Here is a 155-residue protein sequence, read N- to C-terminus: Endoribonuclease YbeY (155 aa).

3 residues coordinate Zn(2+): His119, His123, and His129.

This sequence belongs to the endoribonuclease YbeY family. Requires Zn(2+) as cofactor.

The protein localises to the cytoplasm. Single strand-specific metallo-endoribonuclease involved in late-stage 70S ribosome quality control and in maturation of the 3' terminus of the 16S rRNA. This chain is Endoribonuclease YbeY, found in Mycoplasmopsis synoviae (strain 53) (Mycoplasma synoviae).